The sequence spans 453 residues: MDKQQEFVIRTLEERDIRFVRLWFTDVLGFLKSVAVAPAELEQAFDEGIGFDGSAIEGFARVYESDMIAKPDPSTFQVLPWRAEAPGTARMFCDILMPDGSPSFADPRYVLKRALARTSDLGFTFYTHPEIEFFLLKDKPVDGSVPTPADNSGYFDHTPQNIGMDFRRQAITMLESMGISVEFSHHEGAPGQQEIDLRYADALSTADNVMTFRLVMKQVALEQGLQATFMPKPFSEYPGSGMHTHLSLFEGDRNAFYESGAEYQLSKVGRSFIAGLLRHAAEISAVTNQWVNSYKRIWGGTERTAGAGGEAPSYICWGHNNRSALVRVPMYKPGKTGSARVEVRSIDSGANPYLTYAVLLAAGLKGIEEGYELPPGAEDDVWALSDAERRALGIEPLPQNLGEALALMERSDLVAETLGEHVFDFFLRNKRQEWEEYRSQVTAFELRKSLPVL.

Residues 15 to 100 (RDIRFVRLWF…MFCDILMPDG (86 aa)) enclose the GS beta-grasp domain. The GS catalytic domain maps to 107 to 453 (PRYVLKRALA…FELRKSLPVL (347 aa)). Mg(2+)-binding residues include Glu130 and Glu132. ATP is bound at residue Glu182. Mg(2+)-binding residues include Glu187 and Glu194. L-glutamate is bound at residue Gly239. His243 provides a ligand contact to Mg(2+). 245-247 (HLS) serves as a coordination point for ATP. L-glutamate-binding residues include Arg296, Glu310, and Arg322. ATP is bound by residues Arg322 and Arg327. Glu342 is a Mg(2+) binding site. Position 344 (Arg344) interacts with L-glutamate.

It belongs to the glutamine synthetase family. The cofactor is Mg(2+).

The catalysed reaction is putrescine + L-glutamate + ATP = gamma-L-glutamylputrescine + ADP + phosphate + H(+). It carries out the reaction spermine + L-glutamate + ATP = gamma-L-glutamylspermine + ADP + phosphate + H(+). The enzyme catalyses spermidine + L-glutamate + ATP = gamma-L-glutamylspermidine + ADP + phosphate + H(+). It catalyses the reaction cadaverine + L-glutamate + ATP = gamma-L-glutamylcadaverine + ADP + phosphate + H(+). It participates in amine and polyamine degradation; putrescine degradation. The protein operates within amine and polyamine degradation; spermidine degradation. Its pathway is amine and polyamine degradation; spermine degradation. No effect on activity with glutamine synthetase (GS) inhibitor methionine sulfoximine (MSO). Functionally, involved in the catabolism of polyamines. Catalyzes the ATP-dependent gamma-glutamylation of polyamines. Substrates include putrescine, cadaverine, spermidine and spermine, with a preference for short-chain polyamine putrescine. No complementation of the L-glutamine auxotrophy of an E.coli glnA mutant. Together with GlnA3, enables survival of S.coelicolor under exposure to high local environmental polyamine concentrations, which is toxic to the cells. The sequence is that of Gamma-glutamylpolyamine synthetase GlnA2 from Streptomyces coelicolor (strain ATCC BAA-471 / A3(2) / M145).